A 159-amino-acid chain; its full sequence is Putative 4-hydroxy-4-methyl-2-oxoglutarate aldolase (159 aa).

Substrate is bound by residues 74–77 (GDNL) and arginine 96. Aspartate 97 provides a ligand contact to a divalent metal cation.

The protein belongs to the class II aldolase/RraA-like family. Homotrimer. A divalent metal cation serves as cofactor.

It carries out the reaction 4-hydroxy-4-methyl-2-oxoglutarate = 2 pyruvate. The enzyme catalyses oxaloacetate + H(+) = pyruvate + CO2. In terms of biological role, catalyzes the aldol cleavage of 4-hydroxy-4-methyl-2-oxoglutarate (HMG) into 2 molecules of pyruvate. Also contains a secondary oxaloacetate (OAA) decarboxylase activity due to the common pyruvate enolate transition state formed following C-C bond cleavage in the retro-aldol and decarboxylation reactions. This is Putative 4-hydroxy-4-methyl-2-oxoglutarate aldolase from Bacillus anthracis.